A 907-amino-acid chain; its full sequence is Depolymerase, capsule K2-specific (907 aa).

Residues 137 to 169 (AAAAAASESKAKTSEDNAKSSENAAKNSEVAAE) form a disordered region. Positions 145–155 (SKAKTSEDNAK) are enriched in basic and acidic residues.

This sequence in the N-terminal section; belongs to the Webervirus depolymerase family. The protein in the C-terminal section; belongs to the K2-specific depolymerase family. In terms of assembly, homotrimer.

It is found in the virion. Functions as a receptor binding protein (RBP) and probably mediates the attachment to the host capsular exopolysaccharides. Displays a depolymerase activity that specifically degrades the K2-type polysaccharides of Klebsiella pneumoniae capsule, which allows the phage to reach the host cell membrane and bind the entry receptor. The protein is Depolymerase, capsule K2-specific of Klebsiella (Bacteriophage B1).